A 568-amino-acid chain; its full sequence is Phosphoprotein (568 aa).

The interval 1–24 is disordered; sequence MDQDAFFFERDPEAEGEAPRKQES. The span at 7–24 shows a compositional bias: basic and acidic residues; it reads FFERDPEAEGEAPRKQES. Positions 33–41 are N0 binding; the sequence is DVVLSYKPT. Positions 45-324 are disordered; it reads EDRSWLHNII…SNEEGTSNTS (280 aa). Composition is skewed to basic and acidic residues over residues 56–105, 129–144, and 151–167; these read NPKE…HARI, GDER…PNER, and PTDE…KREE. The span at 179-216 shows a compositional bias: polar residues; the sequence is GSTSLSDDGEGRTNNNGRSMETSSTHSTRITDVITNPS. Residues 239–253 show a composition bias toward basic and acidic residues; the sequence is TRSERTQNSELHKST. Residues 295-304 are compositionally biased toward low complexity; it reads TTNNANNNAK. A multimerization region spans residues 344 to 411; sequence FELSRRASHQ…SSRDLHKRFS (68 aa). The stretch at 387–416 forms a coiled coil; sequence EENRTLLKQIQEEIDSSRDLHKRFSEYQKE. The l protein binding stretch occupies residues 412–445; the sequence is EYQKEQNSLMMANLSTLHIITDRGGKTGDPSDTT. 2 disordered regions span residues 434-455 and 493-513; these read RGGK…TKGK and PVLE…LIPS. Positions 441–450 are enriched in polar residues; that stretch reads PSDTTRSPSV. The interaction with the nucleocapsid (N-RNA) stretch occupies residues 479–568; sequence DLIREDELRE…FEEDIDSLTN (90 aa).

This sequence belongs to the respirovirus P protein family. In terms of assembly, homotetramer. Interacts (via multimerization domain) with polymerase L; this interaction forms the polymerase complex. Interacts (via N-terminus) with N0; this interaction allows P to chaperon N0 before encapsidation and form the N-P complex. Interacts (via C-terminus) with N-RNA template; this interaction positions the polymerase on the template.

Its function is as follows. Essential cofactor of the RNA polymerase L that plays a central role in the transcription and replication by forming the polymerase complex with RNA polymerase L and recruiting L to the genomic N-RNA template for RNA synthesis. Also plays a central role in the encapsidation of nascent RNA chains by forming the encapsidation complex with the nucleocapsid protein N (N-P complex). Acts as a chaperone for newly synthesized free N protein, so-called N0, allowing encapsidation of nascent RNA chains during replication. The nucleoprotein protein N prevents excessive phosphorylation of P, which leads to down-regulation of viral transcription/ replication. Participates, together with N, in the formation of viral factories (viroplasms), which are large inclusions in the host cytoplasm where replication takes place. Recruits host PI4KB and remodel the host endoplasmic reticulum membrane to form viral replication factories. The chain is Phosphoprotein (P/C) from Homo sapiens (Human).